Reading from the N-terminus, the 515-residue chain is Arabinose import ATP-binding protein AraG 2 (515 aa).

Residues 1–22 (MTMQTMTAASGHDAEAGTPPDG) form a disordered region. ABC transporter domains are found at residues 25–260 (LALD…MVGR) and 260–511 (RSIE…LIKL). 57-64 (GENGAGKS) contacts ATP.

Belongs to the ABC transporter superfamily. Arabinose importer (TC 3.A.1.2.2) family. As to quaternary structure, the complex is composed of two ATP-binding proteins (AraG), two transmembrane proteins (AraH) and a solute-binding protein (AraF).

It is found in the cell inner membrane. The catalysed reaction is L-arabinose(out) + ATP + H2O = L-arabinose(in) + ADP + phosphate + H(+). Part of the ABC transporter complex AraFGH involved in arabinose import. Responsible for energy coupling to the transport system. In Burkholderia cenocepacia (strain HI2424), this protein is Arabinose import ATP-binding protein AraG 2.